A 544-amino-acid chain; its full sequence is WD repeat-containing protein 25 (544 aa).

2 disordered regions span residues 17-74 (DSDS…EDPG) and 183-208 (QRQALSTETGKGKDVEPQGPPAGRAP). A compositionally biased stretch (polar residues) spans 30–39 (FNATGQQKDT). WD repeat units lie at residues 244-286 (GHRG…HCLQ), 290-329 (LHTEAVRAARWAPCGRRILSGGFDFALHLTDLETGTQLFS), 330-373 (GRSD…RSYK), 375-420 (TIQQ…KISN), 424-463 (HERFTCPSLALHPREPVFLAQTNGNYLALFSTVWPYRMSR), 469-510 (GHKV…RACT), and 513-544 (GHTQACVGTTYHPVLPSVLATCSWGGDMKIWH).

In terms of tissue distribution, expressed in heart, muscle, testis, ovary, uterus and prostate.

This Homo sapiens (Human) protein is WD repeat-containing protein 25.